A 213-amino-acid chain; its full sequence is Redox-sensing transcriptional repressor Rex (213 aa).

Positions 16–55 (IYYRYLRLLSNSGKNRVSSTELAEAVKVDSATIRRDFSYF) form a DNA-binding region, H-T-H motif. 90-95 (GVGNLG) is an NAD(+) binding site.

Belongs to the transcriptional regulatory Rex family. Homodimer.

The protein resides in the cytoplasm. Modulates transcription in response to changes in cellular NADH/NAD(+) redox state. The chain is Redox-sensing transcriptional repressor Rex from Ligilactobacillus salivarius (strain UCC118) (Lactobacillus salivarius).